A 603-amino-acid polypeptide reads, in one-letter code: Sulfoacetaldehyde acetyltransferase (603 aa).

Belongs to the TPP enzyme family. Homodimer or homotetramer. It depends on Mg(2+) as a cofactor. Requires thiamine diphosphate as cofactor.

The protein resides in the cytoplasm. The catalysed reaction is acetyl phosphate + sulfite + H(+) = sulfoacetaldehyde + phosphate. It participates in organosulfur degradation; taurine degradation via aerobic pathway; acetyl phosphate and sulfite from taurine: step 2/2. This is Sulfoacetaldehyde acetyltransferase (xsc) from Alcaligenes xylosoxydans xylosoxydans (Achromobacter xylosoxidans).